A 511-amino-acid polypeptide reads, in one-letter code: Sodium/hydrogen exchanger 9B1 (511 aa).

Over residues 1–10 (MHTTESKDEH) the composition is skewed to basic and acidic residues. The disordered stretch occupies residues 1 to 41 (MHTTESKDEHLEDENFQTSTTPQSLIDPNSTAHEETKTVIS). The span at 16–31 (FQTSTTPQSLIDPNST) shows a compositional bias: polar residues. The next 13 helical transmembrane spans lie at 67-87 (IITN…VLGS), 95-115 (LFGL…LQLI), 116-136 (RIPL…GFTI), 152-172 (WSSI…GLGL), 187-207 (LAVG…HFIM), 215-235 (FLLG…SMMV), 260-280 (VLAI…GGIV), 284-304 (IASI…GFFV), 337-357 (IGLH…AGTK), 368-388 (IITN…GAEV), 398-418 (IGIF…VTYI), 431-451 (IFIA…GPLV), and 472-492 (VAFL…GILG).

This sequence belongs to the monovalent cation:proton antiporter 1 (CPA1) transporter (TC 2.A.36) family.

Its subcellular location is the cell projection. The protein resides in the cilium. The protein localises to the flagellum membrane. In terms of biological role, sperm-specific Na(+)/H(+) exchanger involved in intracellular pH regulation of spermatozoa. Involved in sperm motility and fertility. This chain is Sodium/hydrogen exchanger 9B1 (SLC9B1), found in Macaca fascicularis (Crab-eating macaque).